Reading from the N-terminus, the 267-residue chain is Trehalose 2-sulfotransferase (267 aa).

Alpha,alpha-trehalose contacts are provided by residues Gln-14, 33 to 39 (EPQEFFQ), Pro-48, and Trp-53. The active-site Proton acceptor is the Glu-36.

The protein belongs to the Stf0 sulfotransferase family. As to quaternary structure, homodimer.

It carries out the reaction alpha,alpha-trehalose + 3'-phosphoadenylyl sulfate = 2-O-sulfo-alpha,alpha-trehalose + adenosine 3',5'-bisphosphate + H(+). Its pathway is glycolipid metabolism. Its function is as follows. Catalyzes the sulfuryl group transfer from 3'-phosphoadenosine-5'-phosphosulfate (PAPS) to trehalose, leading to trehalose-2-sulfate (T2S). The sulfation of trehalose is the first step in the biosynthesis of sulfolipid-1 (SL-1), a major cell wall glycolipid and the most abundant sulfated metabolite found in Mycobacterium tuberculosis, that is a potential virulence factor thought to mediate host-pathogen interactions. In Mycobacterium tuberculosis (strain ATCC 35801 / TMC 107 / Erdman), this protein is Trehalose 2-sulfotransferase.